Here is a 1065-residue protein sequence, read N- to C-terminus: N-terminal acetyltransferase B complex auxiliary subunit NAA25 (1065 aa).

Residues 294 to 327 form a TPR repeat; that stretch reads VDKLRIQGRLLARANDYSAAVDVYKKILELSPDD.

This sequence belongs to the MDM20/NAA25 family. In terms of tissue distribution, ubiquitously expressed, with a higher expression in vascular bundles, hydathodes, leaf primordia and the base of the trichomes.

It is found in the cytoplasm. Its function is as follows. Auxiliary subunit of the NatB N-alpha-acetyltransferase complex. Required for flowering time regulation and for vegetative and reproductive plant development. The sequence is that of N-terminal acetyltransferase B complex auxiliary subunit NAA25 from Arabidopsis thaliana (Mouse-ear cress).